Here is a 179-residue protein sequence, read N- to C-terminus: Large ribosomal subunit protein uL5 (179 aa).

Belongs to the universal ribosomal protein uL5 family. Part of the 50S ribosomal subunit; part of the 5S rRNA/L5/L18/L25 subcomplex. Contacts the 5S rRNA and the P site tRNA. Forms a bridge to the 30S subunit in the 70S ribosome.

Its function is as follows. This is one of the proteins that bind and probably mediate the attachment of the 5S RNA into the large ribosomal subunit, where it forms part of the central protuberance. In the 70S ribosome it contacts protein S13 of the 30S subunit (bridge B1b), connecting the 2 subunits; this bridge is implicated in subunit movement. Contacts the P site tRNA; the 5S rRNA and some of its associated proteins might help stabilize positioning of ribosome-bound tRNAs. In Rickettsia africae (strain ESF-5), this protein is Large ribosomal subunit protein uL5.